The chain runs to 136 residues: ATP synthase epsilon chain (136 aa).

This sequence belongs to the ATPase epsilon chain family. As to quaternary structure, F-type ATPases have 2 components, CF(1) - the catalytic core - and CF(0) - the membrane proton channel. CF(1) has five subunits: alpha(3), beta(3), gamma(1), delta(1), epsilon(1). CF(0) has three main subunits: a, b and c.

The protein localises to the cell membrane. In terms of biological role, produces ATP from ADP in the presence of a proton gradient across the membrane. In Ureaplasma parvum serovar 3 (strain ATCC 27815 / 27 / NCTC 11736), this protein is ATP synthase epsilon chain.